Reading from the N-terminus, the 80-residue chain is RNA-binding protein Hfq (80 aa).

In terms of domain architecture, Sm spans 10-69 (DPFLNTLRREHVPVSIYLVNGIKLQGQIESFDQYVVLLKNTVTQMVYKHAISTVVPARPV).

Belongs to the Hfq family. As to quaternary structure, homohexamer.

Its function is as follows. RNA chaperone that binds small regulatory RNA (sRNAs) and mRNAs to facilitate mRNA translational regulation in response to envelope stress, environmental stress and changes in metabolite concentrations. Also binds with high specificity to tRNAs. The protein is RNA-binding protein Hfq of Azoarcus sp. (strain BH72).